A 277-amino-acid chain; its full sequence is Putative phosphoenolpyruvate synthase regulatory protein (277 aa).

157 to 164 (GVSRSGKT) provides a ligand contact to ADP.

Belongs to the pyruvate, phosphate/water dikinase regulatory protein family. PSRP subfamily.

It carries out the reaction [pyruvate, water dikinase] + ADP = [pyruvate, water dikinase]-phosphate + AMP + H(+). The catalysed reaction is [pyruvate, water dikinase]-phosphate + phosphate + H(+) = [pyruvate, water dikinase] + diphosphate. Its function is as follows. Bifunctional serine/threonine kinase and phosphorylase involved in the regulation of the phosphoenolpyruvate synthase (PEPS) by catalyzing its phosphorylation/dephosphorylation. This is Putative phosphoenolpyruvate synthase regulatory protein from Aromatoleum aromaticum (strain DSM 19018 / LMG 30748 / EbN1) (Azoarcus sp. (strain EbN1)).